Consider the following 125-residue polypeptide: Small ribosomal subunit protein uS12 (125 aa).

D89 bears the 3-methylthioaspartic acid mark. A disordered region spans residues 106–125 (GVKDRKQSRSKYGAKRPKKA). A compositionally biased stretch (basic residues) spans 113 to 125 (SRSKYGAKRPKKA).

This sequence belongs to the universal ribosomal protein uS12 family. As to quaternary structure, part of the 30S ribosomal subunit. Contacts proteins S8 and S17. May interact with IF1 in the 30S initiation complex.

Its function is as follows. With S4 and S5 plays an important role in translational accuracy. Interacts with and stabilizes bases of the 16S rRNA that are involved in tRNA selection in the A site and with the mRNA backbone. Located at the interface of the 30S and 50S subunits, it traverses the body of the 30S subunit contacting proteins on the other side and probably holding the rRNA structure together. The combined cluster of proteins S8, S12 and S17 appears to hold together the shoulder and platform of the 30S subunit. In Aromatoleum aromaticum (strain DSM 19018 / LMG 30748 / EbN1) (Azoarcus sp. (strain EbN1)), this protein is Small ribosomal subunit protein uS12.